We begin with the raw amino-acid sequence, 213 residues long: Glycerol-3-phosphate acyltransferase (213 aa).

Helical transmembrane passes span 3 to 23, 51 to 71, 78 to 98, 115 to 135, and 140 to 160; these read ILLA…VVVS, KAAI…VWLA, DVAI…PVFF, AVHP…AFFF, and LAAL…FGMP.

It belongs to the PlsY family. In terms of assembly, probably interacts with PlsX.

The protein resides in the cell inner membrane. It catalyses the reaction an acyl phosphate + sn-glycerol 3-phosphate = a 1-acyl-sn-glycero-3-phosphate + phosphate. Its pathway is lipid metabolism; phospholipid metabolism. In terms of biological role, catalyzes the transfer of an acyl group from acyl-phosphate (acyl-PO(4)) to glycerol-3-phosphate (G3P) to form lysophosphatidic acid (LPA). This enzyme utilizes acyl-phosphate as fatty acyl donor, but not acyl-CoA or acyl-ACP. The polypeptide is Glycerol-3-phosphate acyltransferase (Burkholderia cenocepacia (strain HI2424)).